Here is a 425-residue protein sequence, read N- to C-terminus: Serine--tRNA ligase 2 (425 aa).

L-serine is bound at residue 234 to 236 (TAE). 265 to 267 (RVE) serves as a coordination point for ATP. L-serine is bound at residue Glu288. ATP is bound at residue 352-355 (EVSS). L-serine is bound at residue Ser388.

The protein belongs to the class-II aminoacyl-tRNA synthetase family. Type-1 seryl-tRNA synthetase subfamily. In terms of assembly, homodimer. The tRNA molecule binds across the dimer.

It localises to the cytoplasm. It carries out the reaction tRNA(Ser) + L-serine + ATP = L-seryl-tRNA(Ser) + AMP + diphosphate + H(+). The enzyme catalyses tRNA(Sec) + L-serine + ATP = L-seryl-tRNA(Sec) + AMP + diphosphate + H(+). It participates in aminoacyl-tRNA biosynthesis; selenocysteinyl-tRNA(Sec) biosynthesis; L-seryl-tRNA(Sec) from L-serine and tRNA(Sec): step 1/1. In terms of biological role, catalyzes the attachment of serine to tRNA(Ser). Is also able to aminoacylate tRNA(Sec) with serine, to form the misacylated tRNA L-seryl-tRNA(Sec), which will be further converted into selenocysteinyl-tRNA(Sec). This Clostridium acetobutylicum (strain ATCC 824 / DSM 792 / JCM 1419 / IAM 19013 / LMG 5710 / NBRC 13948 / NRRL B-527 / VKM B-1787 / 2291 / W) protein is Serine--tRNA ligase 2.